The following is a 315-amino-acid chain: ATP synthase gamma chain (315 aa).

This sequence belongs to the ATPase gamma chain family. F-type ATPases have 2 components, CF(1) - the catalytic core - and CF(0) - the membrane proton channel. CF(1) has five subunits: alpha(3), beta(3), gamma(1), delta(1), epsilon(1). CF(0) has three main subunits: a, b and c.

It is found in the cellular thylakoid membrane. In terms of biological role, produces ATP from ADP in the presence of a proton gradient across the membrane. The gamma chain is believed to be important in regulating ATPase activity and the flow of protons through the CF(0) complex. This Nostoc sp. (strain PCC 7120 / SAG 25.82 / UTEX 2576) protein is ATP synthase gamma chain.